Reading from the N-terminus, the 703-residue chain is Prolyl 3-hydroxylase 2 (703 aa).

Residues 1-21 (MRESTWVSLLLLLLLPTPQRG) form the signal peptide. A disordered region spans residues 17 to 40 (TPQRGGPQDGRRSPEPEPERGPLQ). Over residues 25-36 (DGRRSPEPEPER) the composition is skewed to basic and acidic residues. TPR repeat units follow at residues 42-75 (FDLL…HRRL), 144-177 (RVPY…NPEH), 205-238 (HLES…YFNE), and 301-334 (PLHY…HPDN). Residues asparagine 444 and asparagine 544 are each glycosylated (N-linked (GlcNAc...) asparagine). The Fe2OG dioxygenase domain maps to 552–666 (THMVCRTALS…RCAVALWFTL (115 aa)). Positions 575, 577, and 647 each coordinate Fe cation. Residue arginine 657 is part of the active site. Positions 700 to 703 (KDEL) match the Prevents secretion from ER motif.

This sequence belongs to the leprecan family. Fe cation serves as cofactor. Requires L-ascorbate as cofactor. In terms of tissue distribution, detected in kidney. Detected on kidney tubular cells, pancreas acinar cells, Schwann cells of the peripheral nerve in the pinna, and in tunica adventitia, the smooth muscle layer of the aortic wall (at protein level). Detected in lung, skeletal muscle and kidney. Detected in kidney glomeruli and in prehypertrophic regions of long bone from neonates. In the eye, detected in the epithelial layer of the cornea and at lower levels in the sclera at the posterior end of the eye.

The protein resides in the endoplasmic reticulum. The protein localises to the sarcoplasmic reticulum. It is found in the golgi apparatus. It carries out the reaction L-prolyl-[collagen] + 2-oxoglutarate + O2 = trans-3-hydroxy-L-prolyl-[collagen] + succinate + CO2. In terms of biological role, prolyl 3-hydroxylase that catalyzes the post-translational formation of 3-hydroxyproline on collagens. Contributes to proline 3-hydroxylation of collagen COL4A1 and COL1A1 in tendons, the eye sclera and in the eye lens capsule. Has high activity with the type IV collagen COL4A1, and lower activity with COL1A1. Catalyzes hydroxylation of the first Pro in Gly-Pro-Hyp sequences where Hyp is 4-hydroxyproline. Has no activity on substrates that have proline instead of 4-hydroxyproline in the third position. The polypeptide is Prolyl 3-hydroxylase 2 (Mus musculus (Mouse)).